Here is a 1954-residue protein sequence, read N- to C-terminus: Integrin beta-like protein C (1954 aa).

The signal sequence occupies residues 1-20; that stretch reads MNKLFYLFILIASLFILTDA. Over 21-1883 the chain is Extracellular; sequence SHFRFGTISW…TTTQTNDNKT (1863 aa). 2 N-linked (GlcNAc...) asparagine glycosylation sites follow: Asn138 and Asn354. The region spanning 428–465 is the EGF-like domain; that stretch reads YGENCVAVPPCVNGVPNSGINGDGKCLCSNGWTGADCS. 2 disulfides stabilise this stretch: Cys438–Cys453 and Cys455–Cys464. The N-linked (GlcNAc...) asparagine glycan is linked to Asn479. The 186-residue stretch at 521-706 folds into the VWFA domain; sequence DVYVLVDANL…TGVKNVLSKI (186 aa). N-linked (GlcNAc...) asparagine glycosylation is found at Asn1348, Asn1382, Asn1628, Asn1678, Asn1742, Asn1770, Asn1820, Asn1860, and Asn1881. The chain crosses the membrane as a helical span at residues 1884 to 1904; the sequence is VLTGAIAGAAAGTALIAAAAW. The Cytoplasmic portion of the chain corresponds to 1905–1954; sequence RLLRKAAPPTDTFFSEAAFLGDGVSSNPLYEQSASAAENPLYQSASDTTD.

It belongs to the SIB family. In terms of assembly, interacts with talA/talin.

The protein resides in the membrane. In terms of biological role, implicated in cellular adhesion. The sequence is that of Integrin beta-like protein C (sibC) from Dictyostelium discoideum (Social amoeba).